Consider the following 154-residue polypeptide: Crossover junction endodeoxyribonuclease RuvC (154 aa).

Residues aspartate 7, glutamate 67, and aspartate 139 contribute to the active site. 3 residues coordinate Mg(2+): aspartate 7, glutamate 67, and aspartate 139.

It belongs to the RuvC family. Homodimer which binds Holliday junction (HJ) DNA. The HJ becomes 2-fold symmetrical on binding to RuvC with unstacked arms; it has a different conformation from HJ DNA in complex with RuvA. In the full resolvosome a probable DNA-RuvA(4)-RuvB(12)-RuvC(2) complex forms which resolves the HJ. The cofactor is Mg(2+).

The protein resides in the cytoplasm. The enzyme catalyses Endonucleolytic cleavage at a junction such as a reciprocal single-stranded crossover between two homologous DNA duplexes (Holliday junction).. In terms of biological role, the RuvA-RuvB-RuvC complex processes Holliday junction (HJ) DNA during genetic recombination and DNA repair. Endonuclease that resolves HJ intermediates. Cleaves cruciform DNA by making single-stranded nicks across the HJ at symmetrical positions within the homologous arms, yielding a 5'-phosphate and a 3'-hydroxyl group; requires a central core of homology in the junction. The consensus cleavage sequence is 5'-(A/T)TT(C/G)-3'. Cleavage occurs on the 3'-side of the TT dinucleotide at the point of strand exchange. HJ branch migration catalyzed by RuvA-RuvB allows RuvC to scan DNA until it finds its consensus sequence, where it cleaves and resolves the cruciform DNA. In Synechococcus sp. (strain WH7803), this protein is Crossover junction endodeoxyribonuclease RuvC.